A 29-amino-acid chain; its full sequence is uncharacterized protein (29 aa).

The helical transmembrane segment at 8-28 threads the bilayer; sequence FALIVVLFILLIIVGTAFVGG.

This sequence belongs to the SscA family.

The protein localises to the membrane. This is an uncharacterized protein from Bacillus subtilis (strain 168).